A 281-amino-acid chain; its full sequence is Bifunctional protein FolD (281 aa).

NADP(+) contacts are provided by residues 161-163 (GRS), Ser186, and Ile227.

It belongs to the tetrahydrofolate dehydrogenase/cyclohydrolase family. Homodimer.

It carries out the reaction (6R)-5,10-methylene-5,6,7,8-tetrahydrofolate + NADP(+) = (6R)-5,10-methenyltetrahydrofolate + NADPH. It catalyses the reaction (6R)-5,10-methenyltetrahydrofolate + H2O = (6R)-10-formyltetrahydrofolate + H(+). The protein operates within one-carbon metabolism; tetrahydrofolate interconversion. In terms of biological role, catalyzes the oxidation of 5,10-methylenetetrahydrofolate to 5,10-methenyltetrahydrofolate and then the hydrolysis of 5,10-methenyltetrahydrofolate to 10-formyltetrahydrofolate. This is Bifunctional protein FolD from Brachyspira hyodysenteriae (strain ATCC 49526 / WA1).